We begin with the raw amino-acid sequence, 901 residues long: Putative receptor protein kinase CRINKLY4 (901 aa).

An N-terminal signal peptide occupies residues 1–24; that stretch reads MDHVPALVLAGCCFLALLPGWACG. Residues 25–423 lie on the Extracellular side of the membrane; the sequence is LGSMSSIAVS…SRKLMAFQMR (399 aa). 7 tandem repeats follow at residues 33-68, 72-107, 125-160, 162-195, 203-236, 253-287, and 292-330. Positions 33–330 are 7 X 36 AA repeats; that stretch reads VSYGEDGPVF…PLALPMAVPP (298 aa). 2 N-linked (GlcNAc...) asparagine glycosylation sites follow: Asn151 and Asn179. An N-linked (GlcNAc...) asparagine glycan is attached at Asn282. 3 cysteine pairs are disulfide-bonded: Cys338/Cys365, Cys368/Cys382, and Cys372/Cys390. A TNFR-Cys repeat occupies 357–391; it reads CKPANSRLCLPCSTGCPEGLYESSPCNATADRVCQ. Asn383 carries N-linked (GlcNAc...) asparagine glycosylation. A helical membrane pass occupies residues 424-444; that stretch reads IFVAEIVFAVVLVLSVSVTTC. Over 445–901 the chain is Cytoplasmic; sequence LYVRHKLRHC…QENLYLQHNF (457 aa). In terms of domain architecture, Protein kinase spans 505 to 712; sequence FSEDSQVGKG…EILSGRKAID (208 aa). ATP-binding positions include 511-519 and Lys533; that span reads VGKGSFSCV. Asp634 acts as the Proton acceptor in catalysis. The disordered stretch occupies residues 845-876; that stretch reads VTSSQRRKSSASEADIVGRRATDGRNVGSSIG.

It belongs to the protein kinase superfamily. Ser/Thr protein kinase family. As to quaternary structure, homodimer.

The protein resides in the cell membrane. It is found in the endosome. The protein localises to the multivesicular body membrane. It carries out the reaction L-seryl-[protein] + ATP = O-phospho-L-seryl-[protein] + ADP + H(+). The catalysed reaction is L-threonyl-[protein] + ATP = O-phospho-L-threonyl-[protein] + ADP + H(+). Its function is as follows. Putative receptor protein kinase. Could play a role in a differentiation signal. The CRINKLY4 (CR4) mutation affects leaf epidermis differentiation such that cell size and morphology are altered, and surface functions are compromised, allowing graft-like fusions between organs. The polypeptide is Putative receptor protein kinase CRINKLY4 (CR4) (Zea mays (Maize)).